A 402-amino-acid chain; its full sequence is Multidrug resistance protein MdtH (402 aa).

The Cytoplasmic segment spans residues 1–12 (MSRVSQARNLGK). Residues 13–33 (YFLLIDNMLVVLGFFVVFPLI) traverse the membrane as a helical segment. The Periplasmic portion of the chain corresponds to 34-98 (SIRFVDQMGW…GFATMGIAHE (65 aa)). Residues 99–116 (PWLLWFSCLLSGLGGTLF) traverse the membrane as a helical segment. Residues 117–138 (DPPRSALVVKLIRPQQRGRFFS) are Cytoplasmic-facing. Residues 139-159 (LLMMQDSAGAVIGALLGSWLL) form a helical membrane-spanning segment. At 160 to 164 (QYDFR) the chain is on the periplasmic side. Residues 165–185 (LVCATGAVLFVLCAAFNAWLL) traverse the membrane as a helical segment. At 186-213 (PAWKLSTVRTPVREGMTRVMRDKRFVTY) the chain is on the cytoplasmic side. Residues 214–234 (VLTLAGYYMLAVQVMLMLPIM) traverse the membrane as a helical segment. Residues 235 to 243 (VNDVAGAPS) lie on the Periplasmic side of the membrane. The chain crosses the membrane as a helical span at residues 244–264 (AVKWMYAIEACLSLTLLYPIA). The Cytoplasmic portion of the chain corresponds to 265–276 (RWSEKHFRLEHR). A helical transmembrane segment spans residues 277 to 297 (LMAGLLIMSLSMMPVGMVSGL). The Periplasmic segment spans residues 298–299 (QQ). The helical transmembrane segment at 300 to 320 (LFTLICLFYIGSIIAEPARET) threads the bilayer. Over 321-339 (LSASLADARARGSYMGCSR) the chain is Cytoplasmic. The chain crosses the membrane as a helical span at residues 340-360 (LGLAIGGAIGYIGGGWLFDLG). At 361 to 367 (KSAHQPE) the chain is on the periplasmic side. A helical transmembrane segment spans residues 368 to 388 (LPWMMLGIIGIFTFLALGWQF). Residues 389–402 (SQKRAARRLLERDA) lie on the Cytoplasmic side of the membrane.

The protein belongs to the major facilitator superfamily. DHA1 family. MdtH (TC 2.A.1.2.21) subfamily.

It localises to the cell inner membrane. Functionally, confers resistance to norfloxacin and enoxacin. The protein is Multidrug resistance protein MdtH of Escherichia coli (strain SE11).